Reading from the N-terminus, the 113-residue chain is Flagellar hook-basal body complex protein FliE (113 aa).

Belongs to the FliE family.

The protein localises to the bacterial flagellum basal body. This chain is Flagellar hook-basal body complex protein FliE, found in Burkholderia mallei (strain NCTC 10247).